Here is a 501-residue protein sequence, read N- to C-terminus: Cell division control protein 24 (501 aa).

As to quaternary structure, interacts with dna2, pcn1 and rfc1.

Its subcellular location is the nucleus. The protein resides in the cytoplasm. Its function is as follows. Has a role in the progression of DNA replication and in the maintenance of genomic integrity. Acts during S phase, after initiation, where it is essential for completion. The sequence is that of Cell division control protein 24 (cdc24) from Schizosaccharomyces pombe (strain 972 / ATCC 24843) (Fission yeast).